A 428-amino-acid polypeptide reads, in one-letter code: E3 ubiquitin-protein ligase RNF128 (428 aa).

Residues 1-38 (MGPPPGAGVSCRGGCGFSRLLAWCFLLALSPQAPGSRG) form the signal peptide. 3 N-linked (GlcNAc...) asparagine glycosylation sites follow: asparagine 48, asparagine 59, and asparagine 101. A PA domain is found at 75–183 (SPLEPVAGVL…LKGTKILQSI (109 aa)). Residues 208-228 (IFFVSVSFFIITAATVGYFIF) traverse the membrane as a helical segment. Residues 277–318 (CAVCIELYKPNDLVRILTCNHIFHKTCVDPWLLEHRTCPMCK) form an RING-type; atypical zinc finger. Residues 346-428 (ISNSASSHEE…QETAVREIKS (83 aa)) form a disordered region. Positions 360–371 (ETASSGYASVQG) are enriched in polar residues.

Post-translationally, auto-ubiquitinated. Controls the development of T-cell clonal anergy by ubiquitination.

It localises to the cytoplasm. The protein resides in the endomembrane system. Its subcellular location is the cytoskeleton. It is found in the perinuclear region. The catalysed reaction is S-ubiquitinyl-[E2 ubiquitin-conjugating enzyme]-L-cysteine + [acceptor protein]-L-lysine = [E2 ubiquitin-conjugating enzyme]-L-cysteine + N(6)-ubiquitinyl-[acceptor protein]-L-lysine.. The protein operates within protein modification; protein ubiquitination. Its function is as follows. E3 ubiquitin-protein ligase that catalyzes 'Lys-27', 'Lys-48'- or 'Lys-63'-linked polyubiquitin chains formation and plays a role in different biological processes such as modulation of immune response, cytoskeletal dynamics or protein homeostasis. Inhibits IL2 and IL4 transcription, thereby playing an important role in the induction of the anergic phenotype, a long-term stable state of T-lymphocyte unresponsiveness to antigenic stimulation associated with the blockade of interleukin production. Ubiquitinates ARPC5 with 'Lys-48' linkages and COR1A with 'Lys-63' linkages leading to their degradation, down-regulation of these cytoskeletal components results in impaired lamellipodium formation and reduced accumulation of F-actin at the immunological synapse. Functions in the patterning of the dorsal ectoderm; sensitizes ectoderm to respond to neural-inducing signals. Plays a positive role in innate immune response by promoting 'Lys-63'-linked ubiquitination of TBK1 after RNA- or DNA-virus infection. Regulates alveolar macrophage activation and neutrophil infiltration by interacting with TLR4, targeting it for degradation, and inhibiting NF-kappa-B activation, hence decreasing pro-inflammatory cytokines. Negatively regulates the IL-3/STAT5 signaling pathway by facilitating 'Lys-27'-linked polyubiquitination of IL3RA leading to its degradation via lysosomal pathway. Directly regulates the N-glycosylation process in the endoplasmic reticulum by targeting the glycosyl-transferase RPN1 for ubiquitination and degradation. Other substrates targeted for degradation by RNF128 include transmembrane proteins CD40L, CD83 or the tetraspanin CD151. In Homo sapiens (Human), this protein is E3 ubiquitin-protein ligase RNF128 (RNF128).